The sequence spans 77 residues: Translation initiation factor IF-1, chloroplastic (77 aa).

The 71-residue stretch at 1-71 (MKEQKWIHEG…TRGRIIYRLR (71 aa)) folds into the S1-like domain.

Belongs to the IF-1 family. As to quaternary structure, component of the 30S ribosomal translation pre-initiation complex which assembles on the 30S ribosome in the order IF-2 and IF-3, IF-1 and N-formylmethionyl-tRNA(fMet); mRNA recruitment can occur at any time during PIC assembly.

The protein resides in the plastid. It is found in the chloroplast. Its function is as follows. One of the essential components for the initiation of protein synthesis. Stabilizes the binding of IF-2 and IF-3 on the 30S subunit to which N-formylmethionyl-tRNA(fMet) subsequently binds. Helps modulate mRNA selection, yielding the 30S pre-initiation complex (PIC). Upon addition of the 50S ribosomal subunit IF-1, IF-2 and IF-3 are released leaving the mature 70S translation initiation complex. This is Translation initiation factor IF-1, chloroplastic from Antirrhinum majus (Garden snapdragon).